A 177-amino-acid chain; its full sequence is Protein OPG036 (177 aa).

It belongs to the poxviridae OPG036 family.

Its subcellular location is the host nucleus. In terms of biological role, plays a role in the inhibition of host innate immune response. Within the host nucleus, inhibits activation of interferon-beta promoter by inhibiting IRF3 activation. The polypeptide is Protein OPG036 (OPG036) (Homo sapiens (Human)).